A 77-amino-acid polypeptide reads, in one-letter code: uncharacterized protein (77 aa).

Residues 57–76 (NSAVICTLIANLMAFFMLLT) form a helical membrane-spanning segment.

It is found in the membrane. This is an uncharacterized protein from Schizosaccharomyces pombe (strain 972 / ATCC 24843) (Fission yeast).